A 20-amino-acid chain; its full sequence is Hemocyanin subunit Ib (20 aa).

Positions 1-20 are disordered; it reads DSVGSTTAHKQQNINHLLDK.

This sequence belongs to the tyrosinase family. Hemocyanin subfamily. As to quaternary structure, composed of 3 major subunits (IB, II and III) and 1 minor subunit (IA) which form homohexamers and heterohexamers. May also form larger structures. Hemolymph.

It is found in the secreted. Its subcellular location is the extracellular space. Functionally, hemocyanins are copper-containing oxygen carriers occurring freely dissolved in the hemolymph of many mollusks and arthropods. The protein is Hemocyanin subunit Ib of Panulirus japonicus (Japanese spiny lobster).